A 586-amino-acid polypeptide reads, in one-letter code: Protein CBFA2T2 (586 aa).

The segment at 1–95 (MVGIPGPYQF…SSSSSLANQQ (95 aa)) is disordered. A compositionally biased stretch (polar residues) spans 56–68 (SSHSNGINHSPPT). A compositionally biased stretch (low complexity) spans 77-90 (QRSSNGPSSSSSSS). One can recognise a TAFH domain in the interval 102-197 (VRQLSKLKRF…TPSQYLAQHE (96 aa)). Disordered stretches follow at residues 204 to 242 (STSS…AEPP) and 387 to 417 (IRKG…FGSR). Residues 228–237 (DRREEERETA) are compositionally biased toward basic and acidic residues. The segment covering 399–409 (SPSSTDSGASD) has biased composition (low complexity). The stretch at 429–481 (RKAEEAVNEVKRQAMSEVQKAVSEAEQKAFEMIASERARMEQTIVDAKRRAAE) forms a coiled coil. Zn(2+) contacts are provided by C497, C500, C508, C511, C517, C521, H529, and C533. The segment at 497–533 (CWNCGRKASETCSGCNIARYCGSFCQHKDWEKHHRIC) adopts an MYND-type zinc-finger fold. Positions 561–586 (SPTLERSSSATSRSSTPASVTAVDGL) are disordered. A compositionally biased stretch (low complexity) spans 566-586 (RSSSATSRSSTPASVTAVDGL).

It is found in the nucleus. May act as a transcriptional corepressor. The sequence is that of Protein CBFA2T2 (cbfa2t2) from Xenopus laevis (African clawed frog).